Reading from the N-terminus, the 119-residue chain is Large ribosomal subunit protein bL20 (119 aa).

This sequence belongs to the bacterial ribosomal protein bL20 family.

In terms of biological role, binds directly to 23S ribosomal RNA and is necessary for the in vitro assembly process of the 50S ribosomal subunit. It is not involved in the protein synthesizing functions of that subunit. The protein is Large ribosomal subunit protein bL20 of Buchnera aphidicola subsp. Cinara cedri (strain Cc).